The primary structure comprises 333 residues: Fructose-1,6-bisphosphatase class 1 (333 aa).

Glutamate 92, aspartate 113, leucine 115, and aspartate 116 together coordinate Mg(2+). Substrate-binding positions include 116–119 (DGSS), asparagine 209, tyrosine 242, and lysine 272. Glutamate 278 contacts Mg(2+).

This sequence belongs to the FBPase class 1 family. As to quaternary structure, homotetramer. Requires Mg(2+) as cofactor.

Its subcellular location is the cytoplasm. It carries out the reaction beta-D-fructose 1,6-bisphosphate + H2O = beta-D-fructose 6-phosphate + phosphate. It participates in carbohydrate biosynthesis; Calvin cycle. The chain is Fructose-1,6-bisphosphatase class 1 from Chlorobaculum parvum (strain DSM 263 / NCIMB 8327) (Chlorobium vibrioforme subsp. thiosulfatophilum).